Here is a 73-residue protein sequence, read N- to C-terminus: Sec-independent protein translocase protein TatA (73 aa).

A helical membrane pass occupies residues methionine 1–glycine 21.

It belongs to the TatA/E family. The Tat system comprises two distinct complexes: a TatABC complex, containing multiple copies of TatA, TatB and TatC subunits, and a separate TatA complex, containing only TatA subunits. Substrates initially bind to the TatABC complex, which probably triggers association of the separate TatA complex to form the active translocon.

The protein localises to the cell inner membrane. Its function is as follows. Part of the twin-arginine translocation (Tat) system that transports large folded proteins containing a characteristic twin-arginine motif in their signal peptide across membranes. TatA could form the protein-conducting channel of the Tat system. This is Sec-independent protein translocase protein TatA from Mesorhizobium japonicum (strain LMG 29417 / CECT 9101 / MAFF 303099) (Mesorhizobium loti (strain MAFF 303099)).